The primary structure comprises 264 residues: Proliferating cell nuclear antigen (264 aa).

The DNA-binding element occupies 61–80; it reads RCDRNTSMGMNLGNMSKMLK.

Belongs to the PCNA family.

It localises to the nucleus. Its function is as follows. This protein is an auxiliary protein of DNA polymerase delta and is involved in the control of eukaryotic DNA replication by increasing the polymerase's processibility during elongation of the leading strand. In Populus nigra (Lombardy poplar), this protein is Proliferating cell nuclear antigen (PCNA).